Reading from the N-terminus, the 490-residue chain is Cheilanthifoline synthase (490 aa).

A helical membrane pass occupies residues 2–22; sequence EESLWVVTATVVVVFAIAKLL. Residue C432 coordinates heme.

Belongs to the cytochrome P450 family. The cofactor is heme. As to expression, expressed in roots. Detected in leaves and stems.

It is found in the endoplasmic reticulum membrane. It catalyses the reaction (S)-scoulerine + reduced [NADPH--hemoprotein reductase] + O2 = (S)-cheilanthifoline + oxidized [NADPH--hemoprotein reductase] + 2 H2O + H(+). The protein operates within alkaloid biosynthesis. Functionally, methylenedioxy bridge-forming cytochrome P450 involved in the biosynthesis of isoquinoline alkaloids. Converts (S)-scoulerine into (R,S)-cheilanthifoline. Catalyzes an oxidative reaction that does not incorporate oxygen into the product. In Eschscholzia californica (California poppy), this protein is Cheilanthifoline synthase (CYP719A5).